Consider the following 364-residue polypeptide: MPENSSIPNCCEASGLAARPSWSGSAGARPPVTARAPWVAPMLSTVVVVTTAVDFVGNLLVILSVLRNRKLRNAGNLFVVSLALADLVIALYPYPLILVAIIRDGWVLGEAHCKASAFVMGLSVIGSVFNITAIAINRYCCICHSTTYHRVCSHWYTPIYISLVWLLTLVALVPNFFVGSLEYDPRIYSCTFIQTASTQYTAAVVAIHFLLPMAVVSFCYLRIWVLVLQARRKAKATRKLRLRPSDLRSFLTMFAVFVVFAICWAPLNCIGLAVAINPEAMALQVPEGLFVTSYFLAYFNSCLNAIVYGLLNQNFRREYKRILLAIWNTRRCIQHASKHCLTEERQGPTPPAARATVPVKEGAL.

Residues 1–42 (MPENSSIPNCCEASGLAARPSWSGSAGARPPVTARAPWVAPM) lie on the Extracellular side of the membrane. Asn4 carries an N-linked (GlcNAc...) asparagine glycan. The helical transmembrane segment at 43–63 (LSTVVVVTTAVDFVGNLLVIL) threads the bilayer. The Cytoplasmic portion of the chain corresponds to 64-76 (SVLRNRKLRNAGN). A helical membrane pass occupies residues 77–97 (LFVVSLALADLVIALYPYPLI). Topologically, residues 98 to 115 (LVAIIRDGWVLGEAHCKA) are extracellular. Residues Cys113 and Cys190 are joined by a disulfide bond. Residues 116–136 (SAFVMGLSVIGSVFNITAIAI) traverse the membrane as a helical segment. The Cytoplasmic portion of the chain corresponds to 137–155 (NRYCCICHSTTYHRVCSHW). The helical transmembrane segment at 156-176 (YTPIYISLVWLLTLVALVPNF) threads the bilayer. Residues 177-200 (FVGSLEYDPRIYSCTFIQTASTQY) lie on the Extracellular side of the membrane. A helical transmembrane segment spans residues 201–221 (TAAVVAIHFLLPMAVVSFCYL). The Cytoplasmic portion of the chain corresponds to 222-253 (RIWVLVLQARRKAKATRKLRLRPSDLRSFLTM). The chain crosses the membrane as a helical span at residues 254-274 (FAVFVVFAICWAPLNCIGLAV). The Extracellular portion of the chain corresponds to 275-287 (AINPEAMALQVPE). Residues 288–308 (GLFVTSYFLAYFNSCLNAIVY) form a helical membrane-spanning segment. The Cytoplasmic segment spans residues 309 to 364 (GLLNQNFRREYKRILLAIWNTRRCIQHASKHCLTEERQGPTPPAARATVPVKEGAL). The segment at 343 to 364 (EERQGPTPPAARATVPVKEGAL) is disordered. Low complexity predominate over residues 352–364 (AARATVPVKEGAL).

It belongs to the G-protein coupled receptor 1 family.

The protein localises to the cell membrane. Functionally, high affinity receptor for melatonin. The activity of this receptor is mediated by pertussis toxin sensitive G proteins that inhibits adenylate cyclase activity. The chain is Melatonin receptor type 1B (Mtnr1b) from Mus musculus (Mouse).